Here is a 414-residue protein sequence, read N- to C-terminus: UDP-N-acetylglucosamine 1-carboxyvinyltransferase (414 aa).

19–20 is a phosphoenolpyruvate binding site; the sequence is KN. Arg89 contributes to the UDP-N-acetyl-alpha-D-glucosamine binding site. Catalysis depends on Cys113, which acts as the Proton donor. The residue at position 113 (Cys113) is a 2-(S-cysteinyl)pyruvic acid O-phosphothioketal. UDP-N-acetyl-alpha-D-glucosamine is bound by residues 118–122, Asp301, and Val323; that span reads RPIDL.

Belongs to the EPSP synthase family. MurA subfamily.

The protein resides in the cytoplasm. It catalyses the reaction phosphoenolpyruvate + UDP-N-acetyl-alpha-D-glucosamine = UDP-N-acetyl-3-O-(1-carboxyvinyl)-alpha-D-glucosamine + phosphate. Its pathway is cell wall biogenesis; peptidoglycan biosynthesis. Functionally, cell wall formation. Adds enolpyruvyl to UDP-N-acetylglucosamine. This Bdellovibrio bacteriovorus (strain ATCC 15356 / DSM 50701 / NCIMB 9529 / HD100) protein is UDP-N-acetylglucosamine 1-carboxyvinyltransferase.